Here is a 145-residue protein sequence, read N- to C-terminus: Large ribosomal subunit protein uL13 (145 aa).

It belongs to the universal ribosomal protein uL13 family. Part of the 50S ribosomal subunit.

In terms of biological role, this protein is one of the early assembly proteins of the 50S ribosomal subunit, although it is not seen to bind rRNA by itself. It is important during the early stages of 50S assembly. The protein is Large ribosomal subunit protein uL13 of Bacillus pumilus (strain SAFR-032).